We begin with the raw amino-acid sequence, 143 residues long: Periplasmic nitrate reductase, electron transfer subunit (143 aa).

The first 22 residues, 1–22, serve as a signal peptide directing secretion; it reads MKKILTLAAIVLAIGGCSGQQA. Histidine 72, cysteine 85, cysteine 88, histidine 89, histidine 106, cysteine 121, cysteine 124, and histidine 125 together coordinate heme c.

It belongs to the NapB family. In terms of assembly, component of the periplasmic nitrate reductase NapAB complex composed of NapA and NapB. Post-translationally, binds 2 heme C groups per subunit.

Its subcellular location is the periplasm. Electron transfer subunit of the periplasmic nitrate reductase complex NapAB. Receives electrons from the membrane-anchored tetraheme c-type CymA protein and transfers these to NapA subunit, thus allowing electron flow between membrane and periplasm. Not essential for nitrate reduction but confers advantage to the organism when grown on nitrate and thereby a fitness gain in utilizing nitrate. This Shewanella oneidensis (strain ATCC 700550 / JCM 31522 / CIP 106686 / LMG 19005 / NCIMB 14063 / MR-1) protein is Periplasmic nitrate reductase, electron transfer subunit.